Here is a 451-residue protein sequence, read N- to C-terminus: UDP-glycosyltransferase 13 (451 aa).

His-15 serves as the catalytic Proton acceptor. His-15 is a binding site for an anthocyanidin. Catalysis depends on Asp-93, which acts as the Charge relay. Residues Ala-326, Gln-328, His-343, Trp-346, Asn-347, Ser-348, and Glu-351 each coordinate UDP-alpha-D-glucose. An anthocyanidin is bound at residue Ala-366. Residues Glu-367 and Gln-368 each contribute to the UDP-alpha-D-glucose site.

Belongs to the UDP-glycosyltransferase family. Expressed in roots. Detected in stems and leaves.

It carries out the reaction a 7-hydroxyisoflavone + UDP-alpha-D-glucose = a 7-hydroxyisoflavone 7-O-beta-D-glucoside + UDP + H(+). In terms of biological role, isoflavone 7-O-glucosyltransferase converting daidzein to daidzin, genistein to genistin and formononetin to ononin. Shows some activity toward the flavanones liquiritigenin and naringenin, but not toward cyanidin, isoliquiritigenin, apigenin, luteolin, kaempferol, quercetin, daidzin and puerarin. The polypeptide is UDP-glycosyltransferase 13 (Pueraria montana var. lobata (Kudzu vine)).